Consider the following 281-residue polypeptide: Cytochrome c oxidase subunit 3 (281 aa).

7 consecutive transmembrane segments (helical) span residues 34-54 (PWPIAVSFSLLVVTLSGVMTF), 59-79 (NGLFLLTLGFISLVSTMTLWF), 103-123 (GFVLFVVSEVFFFISIFWAFF), 148-168 (WEVPLLNTVILLSSGATVTYA), 179-199 (VIYGLIATIVLATVFTGFQGF), 220-240 (ATGFHGIHVLVGTIFLTVGLF), and 259-279 (ILYWHFVDVVWLFLFISVYWW).

It belongs to the cytochrome c oxidase subunit 3 family. As to quaternary structure, component of the cytochrome c oxidase (complex IV, CIV), a multisubunit enzyme composed of a catalytic core of 3 subunits and several supernumerary subunits. The complex exists as a monomer or a dimer and forms supercomplexes (SCs) in the inner mitochondrial membrane with ubiquinol-cytochrome c oxidoreductase (cytochrome b-c1 complex, complex III, CIII).

It is found in the mitochondrion inner membrane. It carries out the reaction 4 Fe(II)-[cytochrome c] + O2 + 8 H(+)(in) = 4 Fe(III)-[cytochrome c] + 2 H2O + 4 H(+)(out). Component of the cytochrome c oxidase, the last enzyme in the mitochondrial electron transport chain which drives oxidative phosphorylation. The respiratory chain contains 3 multisubunit complexes succinate dehydrogenase (complex II, CII), ubiquinol-cytochrome c oxidoreductase (cytochrome b-c1 complex, complex III, CIII) and cytochrome c oxidase (complex IV, CIV), that cooperate to transfer electrons derived from NADH and succinate to molecular oxygen, creating an electrochemical gradient over the inner membrane that drives transmembrane transport and the ATP synthase. Cytochrome c oxidase is the component of the respiratory chain that catalyzes the reduction of oxygen to water. Electrons originating from reduced cytochrome c in the intermembrane space (IMS) are transferred via the dinuclear copper A center (CU(A)) of subunit 2 and heme A of subunit 1 to the active site in subunit 1, a binuclear center (BNC) formed by heme A3 and copper B (CU(B)). The BNC reduces molecular oxygen to 2 water molecules using 4 electrons from cytochrome c in the IMS and 4 protons from the mitochondrial matrix. This chain is Cytochrome c oxidase subunit 3 (COX3), found in Rhizopus stolonifer (Rhizopus nigricans).